Reading from the N-terminus, the 892-residue chain is UPF0182 protein Gura_0902 (892 aa).

The next 7 helical transmembrane spans lie at phenylalanine 6–phenylalanine 26, valine 50–phenylalanine 70, leucine 103–tryptophan 123, methionine 158–tyrosine 178, leucine 201–cysteine 221, isoleucine 248–alanine 268, and leucine 271–proline 291.

This sequence belongs to the UPF0182 family.

Its subcellular location is the cell membrane. The chain is UPF0182 protein Gura_0902 from Geotalea uraniireducens (strain Rf4) (Geobacter uraniireducens).